The chain runs to 331 residues: Dioxygenase swnH2 (331 aa).

Over residues 1–11 (MINSDAQSAQK) the composition is skewed to polar residues. The tract at residues 1–31 (MINSDAQSAQKQVEVEKPDEKYSAPRLLPPI) is disordered. The segment covering 13 to 23 (VEVEKPDEKYS) has biased composition (basic and acidic residues). Fe cation-binding residues include H173, D175, and H250.

Belongs to the PhyH family. In terms of assembly, homodimer. Requires Fe cation as cofactor.

It functions in the pathway mycotoxin biosynthesis. Functionally, dioxygenase; part of the gene cluster that mediates the biosynthesis of swainsonine (SW), a cytotoxic fungal alkaloid and a potential cancer therapy drug. Swainsonine production occurs via a multibranched pathway and is dispensable for fungal colonization of plants and infection of insect hosts. The first step of swainsonine biosynthesis is the production of the precursor pipecolic acid (PA) via conversion of L-lysine (Lys) to 1-piperideine-6-carboxylate (P6C) by the aminotransferase swnA, the latter being further reduced to PA by the reductase swnR. PA can be converted from lysine by both the SW biosynthetic cluster and the unclustered genes such as lysine cyclodeaminase. The PKS-NRPS hybrid synthetase swnK uptakes and condensates PA and malonyl-CoA with and without skipping of the ketoreductase (KR) domain in order to produce 3 intermediates, 1-oxoindolizidine, (1S)-1-hydroxyindolizin, and (1R)-1-hydroxyindolizine; with the transisomer (1S)-1-hydroxyindolizin being predominant. The terminal thioester reductase (TE) domain of swnK is involved in reduction of the thioester bond to release the intermediate aldehydes. The oxidoreductase swnN could contribute to the reduction of 1-oxoindolizidine to (1S)-1-hydroxyindolizin and (1R)-1-hydroxyindolizine, contributing to the major route of SW production. The dioxygenase swnH2 would be responsible for the oxidization of (1R)-1-hydroxyindolizine into (1R,2S)-1,2-dihydroxyindolizine and of (1S)-1-hydroxyindolizin to yield both (1R,2S)-1,2-dihydroxyindolizine and (1S,2S)-1,2-dihydroxyindolizine. The dioxygenase swnH1 then performs the conversion of the 1,2-dihydroxyindolizine epimers to SW. The sequence is that of Dioxygenase swnH2 from Metarhizium robertsii (strain ARSEF 23 / ATCC MYA-3075) (Metarhizium anisopliae (strain ARSEF 23)).